Consider the following 887-residue polypeptide: Beta-galactosidase 14 (887 aa).

Residues 1–31 form the signal peptide; sequence MSKSSRIRMKSRTRYLIAILLVISLCSKASS. The active-site Proton donor is glutamate 197. Residue glutamate 268 is the Nucleophile of the active site. Asparagine 269, asparagine 300, asparagine 395, and asparagine 785 each carry an N-linked (GlcNAc...) asparagine glycan. The SUEL-type lectin domain maps to 752-838; sequence KDMRLKAVMR…KTLAVQVKCE (87 aa). Basic and acidic residues predominate over residues 838–852; the sequence is EKKEGKQDEKKKKED. The segment at 838 to 887 is disordered; it reads EKKEGKQDEKKKKEDKDEEEEDDEDDDEEEEEEDKENKDTKDMENKNQDM. The span at 853-871 shows a compositional bias: acidic residues; sequence KDEEEEDDEDDDEEEEEED. Basic and acidic residues predominate over residues 872 to 887; sequence KENKDTKDMENKNQDM.

This sequence belongs to the glycosyl hydrolase 35 family.

The protein localises to the secreted. Its subcellular location is the extracellular space. The protein resides in the apoplast. The catalysed reaction is Hydrolysis of terminal non-reducing beta-D-galactose residues in beta-D-galactosides.. The protein is Beta-galactosidase 14 (BGAL14) of Arabidopsis thaliana (Mouse-ear cress).